The sequence spans 357 residues: DNA primase small subunit PriS (357 aa).

Residues Asp105, Asp107, and Asp259 contribute to the active site.

It belongs to the eukaryotic-type primase small subunit family. Heterodimer of a small subunit (PriS) and a large subunit (PriL). Mg(2+) serves as cofactor. The cofactor is Mn(2+).

Catalytic subunit of DNA primase, an RNA polymerase that catalyzes the synthesis of short RNA molecules used as primers for DNA polymerase during DNA replication. The small subunit contains the primase catalytic core and has DNA synthesis activity on its own. Binding to the large subunit stabilizes and modulates the activity, increasing the rate of DNA synthesis while decreasing the length of the DNA fragments, and conferring RNA synthesis capability. The DNA polymerase activity may enable DNA primase to also catalyze primer extension after primer synthesis. May also play a role in DNA repair. This chain is DNA primase small subunit PriS, found in Methanococcus maripaludis (strain DSM 14266 / JCM 13030 / NBRC 101832 / S2 / LL).